A 557-amino-acid polypeptide reads, in one-letter code: DNA ligase (557 aa).

Residue E249 coordinates ATP. The active-site N6-AMP-lysine intermediate is K251. ATP contacts are provided by R256, R271, E301, F340, R417, and K423.

Belongs to the ATP-dependent DNA ligase family. Mg(2+) serves as cofactor.

It carries out the reaction ATP + (deoxyribonucleotide)n-3'-hydroxyl + 5'-phospho-(deoxyribonucleotide)m = (deoxyribonucleotide)n+m + AMP + diphosphate.. In terms of biological role, DNA ligase that seals nicks in double-stranded DNA during DNA replication, DNA recombination and DNA repair. This Methanothermobacter thermautotrophicus (Methanobacterium thermoformicicum) protein is DNA ligase.